The chain runs to 541 residues: Glucose-6-phosphate isomerase (541 aa).

Glu-346 acts as the Proton donor in catalysis. Residues His-377 and Lys-506 contribute to the active site.

Belongs to the GPI family.

The protein resides in the cytoplasm. It catalyses the reaction alpha-D-glucose 6-phosphate = beta-D-fructose 6-phosphate. It functions in the pathway carbohydrate biosynthesis; gluconeogenesis. It participates in carbohydrate degradation; glycolysis; D-glyceraldehyde 3-phosphate and glycerone phosphate from D-glucose: step 2/4. Catalyzes the reversible isomerization of glucose-6-phosphate to fructose-6-phosphate. In Rhizobium etli (strain ATCC 51251 / DSM 11541 / JCM 21823 / NBRC 15573 / CFN 42), this protein is Glucose-6-phosphate isomerase.